Consider the following 441-residue polypeptide: Glutamate-1-semialdehyde 2,1-aminomutase (441 aa).

Lys-279 bears the N6-(pyridoxal phosphate)lysine mark.

Belongs to the class-III pyridoxal-phosphate-dependent aminotransferase family. HemL subfamily. In terms of assembly, homodimer. The cofactor is pyridoxal 5'-phosphate.

Its subcellular location is the cytoplasm. It catalyses the reaction (S)-4-amino-5-oxopentanoate = 5-aminolevulinate. Its pathway is porphyrin-containing compound metabolism; protoporphyrin-IX biosynthesis; 5-aminolevulinate from L-glutamyl-tRNA(Glu): step 2/2. The protein is Glutamate-1-semialdehyde 2,1-aminomutase of Leptospira borgpetersenii serovar Hardjo-bovis (strain JB197).